The chain runs to 471 residues: Putative multidrug resistance protein MdtD (471 aa).

13 helical membrane passes run 12–32 (LWIVAFGFFMQSLDTTIVNTA), 49–69 (MVVVSYVLTVAVMLPASGWLA), 77–97 (IFFTAIVLFTLGSLFCAWSST), 102–124 (VLARVLQGVGGAMMVPVGRLTVM), 138–158 (FVTLPGQVGPLLGPALGGILV), 165–185 (WIFLINIPVGIVGAIATLMLM), 197–217 (LSGFLLLAVGMAVLTMALDGS), 222–242 (LSPLSLGALVLCGILAIALYL), 263–283 (FSLGLSGSFAGRVGSGMLPFM), 286–306 (VFLQIGLGFSPFHAGLMMIPM), 342–362 (LLFMSVAMLGWYYALPFVLFL), 396–416 (MIMQLSMSIGVTIAGLLLGMF), and 431–451 (VFMYTWLCMALIIALPALIFA).

This sequence belongs to the major facilitator superfamily. TCR/Tet family.

The protein localises to the cell inner membrane. This is Putative multidrug resistance protein MdtD from Citrobacter koseri (strain ATCC BAA-895 / CDC 4225-83 / SGSC4696).